The chain runs to 338 residues: Anthocyanidin reductase ((2S)-flavan-3-ol-forming) (338 aa).

NADP(+) contacts are provided by residues 18–21 (TGFV), Lys48, 87–90 (VATP), and Tyr168.

It belongs to the NAD(P)-dependent epimerase/dehydratase family. Dihydroflavonol-4-reductase subfamily. As to expression, expressed in leaves and grape berries.

The catalysed reaction is a (2S,3R)-flavan-3-ol + 2 NADP(+) = an anthocyanidin with a 3-hydroxy group + 2 NADPH + 2 H(+). The enzyme catalyses a (2S,3S)-flavan-3-ol + 2 NADP(+) = an anthocyanidin with a 3-hydroxy group + 2 NADPH + 2 H(+). Its pathway is secondary metabolite biosynthesis; flavonoid biosynthesis. In terms of biological role, produces the terminal flavan-3-ol monomers required for the formation of proanthocyanidins or condensed tannins in leaves and flowers, as well as in the skin and seeds of developing berries. Behaves as a reductase and as a C-3 epimerase. Catalyzes the double reduction of anthocyanidins, producing a mixture of (2S,3S)- and (2S,3R)-flavan-3-ols. The enzyme catalyzes sequential hydride transfers to C-2 and C-4, respectively and epimerization at C-3 is achieved by tautomerization that occurs between the two hydride transfers. Converts cyanidin, pelargonidin and delphinidin into catechin and epicatechin, afzelechin and epiafzelechin, and gallocatechin and epigallocatechin respectively. This chain is Anthocyanidin reductase ((2S)-flavan-3-ol-forming), found in Vitis vinifera (Grape).